The chain runs to 100 residues: Small ribosomal subunit protein bS20 (100 aa).

This sequence belongs to the bacterial ribosomal protein bS20 family.

Its function is as follows. Binds directly to 16S ribosomal RNA. The polypeptide is Small ribosomal subunit protein bS20 (Synechococcus sp. (strain JA-3-3Ab) (Cyanobacteria bacterium Yellowstone A-Prime)).